The sequence spans 344 residues: Heat-inducible transcription repressor HrcA (344 aa).

Belongs to the HrcA family.

Negative regulator of class I heat shock genes (grpE-dnaK-dnaJ and groELS operons). Prevents heat-shock induction of these operons. The polypeptide is Heat-inducible transcription repressor HrcA (Streptococcus pneumoniae (strain P1031)).